A 108-amino-acid polypeptide reads, in one-letter code: DNA-directed RNA polymerase subunit omega (108 aa).

Belongs to the RNA polymerase subunit omega family. As to quaternary structure, the RNAP catalytic core consists of 2 alpha, 1 beta, 1 beta' and 1 omega subunit. When a sigma factor is associated with the core the holoenzyme is formed, which can initiate transcription.

It catalyses the reaction RNA(n) + a ribonucleoside 5'-triphosphate = RNA(n+1) + diphosphate. Its function is as follows. Promotes RNA polymerase assembly. Latches the N- and C-terminal regions of the beta' subunit thereby facilitating its interaction with the beta and alpha subunits. The chain is DNA-directed RNA polymerase subunit omega from Mycolicibacterium paratuberculosis (strain ATCC BAA-968 / K-10) (Mycobacterium paratuberculosis).